The sequence spans 284 residues: 2,3,4,5-tetrahydropyridine-2,6-dicarboxylate N-succinyltransferase (284 aa).

Residues Arg111 and Asp148 each contribute to the substrate site.

It belongs to the transferase hexapeptide repeat family. Homotrimer.

Its subcellular location is the cytoplasm. It carries out the reaction (S)-2,3,4,5-tetrahydrodipicolinate + succinyl-CoA + H2O = (S)-2-succinylamino-6-oxoheptanedioate + CoA. It participates in amino-acid biosynthesis; L-lysine biosynthesis via DAP pathway; LL-2,6-diaminopimelate from (S)-tetrahydrodipicolinate (succinylase route): step 1/3. This is 2,3,4,5-tetrahydropyridine-2,6-dicarboxylate N-succinyltransferase from Brucella melitensis biotype 2 (strain ATCC 23457).